Reading from the N-terminus, the 322-residue chain is Ferrochelatase (322 aa).

Fe cation contacts are provided by His-193 and Glu-274.

It belongs to the ferrochelatase family.

It localises to the cytoplasm. It carries out the reaction heme b + 2 H(+) = protoporphyrin IX + Fe(2+). Its pathway is porphyrin-containing compound metabolism; protoheme biosynthesis; protoheme from protoporphyrin-IX: step 1/1. In terms of biological role, catalyzes the ferrous insertion into protoporphyrin IX. In Aliivibrio fischeri (strain MJ11) (Vibrio fischeri), this protein is Ferrochelatase.